Reading from the N-terminus, the 483-residue chain is Probable cytosol aminopeptidase (483 aa).

Mn(2+)-binding residues include lysine 252 and aspartate 257. Residue lysine 264 is part of the active site. The Mn(2+) site is built by aspartate 275, aspartate 334, and glutamate 336. The active site involves arginine 338.

Belongs to the peptidase M17 family. Mn(2+) is required as a cofactor.

The protein resides in the cytoplasm. It carries out the reaction Release of an N-terminal amino acid, Xaa-|-Yaa-, in which Xaa is preferably Leu, but may be other amino acids including Pro although not Arg or Lys, and Yaa may be Pro. Amino acid amides and methyl esters are also readily hydrolyzed, but rates on arylamides are exceedingly low.. It catalyses the reaction Release of an N-terminal amino acid, preferentially leucine, but not glutamic or aspartic acids.. In terms of biological role, presumably involved in the processing and regular turnover of intracellular proteins. Catalyzes the removal of unsubstituted N-terminal amino acids from various peptides. This chain is Probable cytosol aminopeptidase, found in Legionella pneumophila (strain Paris).